Reading from the N-terminus, the 320-residue chain is Cytochrome f (320 aa).

Residues 1–35 (MQTRKTFSWIKEQIARSISVSLLIYIITRTSISSA) form the signal peptide. Heme is bound by residues Tyr36, Cys56, Cys59, and His60. Residues 286–306 (VQGLLFFLASVILAQIFLVLK) form a helical membrane-spanning segment.

The protein belongs to the cytochrome f family. As to quaternary structure, the 4 large subunits of the cytochrome b6-f complex are cytochrome b6, subunit IV (17 kDa polypeptide, petD), cytochrome f and the Rieske protein, while the 4 small subunits are PetG, PetL, PetM and PetN. The complex functions as a dimer. The cofactor is heme.

The protein resides in the plastid. It is found in the chloroplast thylakoid membrane. In terms of biological role, component of the cytochrome b6-f complex, which mediates electron transfer between photosystem II (PSII) and photosystem I (PSI), cyclic electron flow around PSI, and state transitions. The sequence is that of Cytochrome f from Jasminum nudiflorum (Winter jasmine).